A 279-amino-acid polypeptide reads, in one-letter code: Oxygen-dependent coproporphyrinogen-III oxidase (279 aa).

S102 provides a ligand contact to substrate. A divalent metal cation-binding residues include H106 and H116. H116 functions as the Proton donor in the catalytic mechanism. 118–120 provides a ligand contact to substrate; that stretch reads NTR. A divalent metal cation-binding residues include H149 and H179. An important for dimerization region spans residues 244 to 279; the sequence is YVEFNLLYDRGTKFGLMTDGNVEAILMSLPPEVKFN.

It belongs to the aerobic coproporphyrinogen-III oxidase family. As to quaternary structure, homodimer. A divalent metal cation is required as a cofactor.

The protein localises to the cytoplasm. The enzyme catalyses coproporphyrinogen III + O2 + 2 H(+) = protoporphyrinogen IX + 2 CO2 + 2 H2O. The protein operates within porphyrin-containing compound metabolism; protoporphyrin-IX biosynthesis; protoporphyrinogen-IX from coproporphyrinogen-III (O2 route): step 1/1. In terms of biological role, involved in the heme biosynthesis. Catalyzes the aerobic oxidative decarboxylation of propionate groups of rings A and B of coproporphyrinogen-III to yield the vinyl groups in protoporphyrinogen-IX. This is Oxygen-dependent coproporphyrinogen-III oxidase from Rickettsia peacockii (strain Rustic).